Here is a 362-residue protein sequence, read N- to C-terminus: Heat-inducible transcription repressor HrcA (362 aa).

The protein belongs to the HrcA family.

Its function is as follows. Negative regulator of class I heat shock genes (grpE-dnaK-dnaJ and groELS operons). Prevents heat-shock induction of these operons. The chain is Heat-inducible transcription repressor HrcA from Rhizobium rhizogenes (strain K84 / ATCC BAA-868) (Agrobacterium radiobacter).